Consider the following 487-residue polypeptide: GTPase Der (487 aa).

The interval 1 to 20 (MAKAVRKSNSEETVPIKAPR) is disordered. EngA-type G domains lie at 28–197 (PVVS…SSKP) and 225–401 (FRLA…SRSR). Residues 34–41 (GRQNVGKS), 83–87 (DTPGL), 149–152 (NKAD), 231–238 (GKPNSGKS), 278–282 (DTAGI), and 343–346 (NKWD) contribute to the GTP site. In terms of domain architecture, KH-like spans 402–486 (RKVSTSELNK…PVRLEFRSDR (85 aa)).

This sequence belongs to the TRAFAC class TrmE-Era-EngA-EngB-Septin-like GTPase superfamily. EngA (Der) GTPase family. As to quaternary structure, associates with the 50S ribosomal subunit.

Functionally, GTPase that plays an essential role in the late steps of ribosome biogenesis. In Leptospira borgpetersenii serovar Hardjo-bovis (strain L550), this protein is GTPase Der.